The primary structure comprises 468 residues: Ribulose bisphosphate carboxylase large chain (468 aa).

Residue Lys-5 is modified to N6,N6,N6-trimethyllysine. Residues Asn-114 and Thr-164 each contribute to the substrate site. Residue Lys-166 is the Proton acceptor of the active site. Lys-168 contacts substrate. Mg(2+)-binding residues include Lys-192, Asp-194, and Glu-195. Lys-192 is subject to N6-carboxylysine. His-285 (proton acceptor) is an active-site residue. Substrate-binding residues include Arg-286, His-318, and Ser-370.

It belongs to the RuBisCO large chain family. Type I subfamily. As to quaternary structure, heterohexadecamer of 8 large chains and 8 small chains; disulfide-linked. The disulfide link is formed within the large subunit homodimers. Mg(2+) serves as cofactor. Post-translationally, the disulfide bond which can form in the large chain dimeric partners within the hexadecamer appears to be associated with oxidative stress and protein turnover.

It localises to the plastid. It is found in the chloroplast. The catalysed reaction is 2 (2R)-3-phosphoglycerate + 2 H(+) = D-ribulose 1,5-bisphosphate + CO2 + H2O. It carries out the reaction D-ribulose 1,5-bisphosphate + O2 = 2-phosphoglycolate + (2R)-3-phosphoglycerate + 2 H(+). Its function is as follows. RuBisCO catalyzes two reactions: the carboxylation of D-ribulose 1,5-bisphosphate, the primary event in carbon dioxide fixation, as well as the oxidative fragmentation of the pentose substrate in the photorespiration process. Both reactions occur simultaneously and in competition at the same active site. The polypeptide is Ribulose bisphosphate carboxylase large chain (Anthocercis viscosa (Sticky tailflower)).